The chain runs to 823 residues: Dolichyl-diphosphooligosaccharide--protein glycosyltransferase subunit STT3B (823 aa).

The segment at 1-58 (MAEPSAPESKHKSSLNSSPWSGLMALGNSRHGHHGPGTQSASSAAAPKPGPPAGLSGG) is disordered. Ala-2 is subject to N-acetylalanine. Residues 2-41 (AEPSAPESKHKSSLNSSPWSGLMALGNSRHGHHGPGTQSA) lie on the Cytoplasmic side of the membrane. Phosphoserine is present on residues Ser-13, Ser-18, and Ser-29. The chain crosses the membrane as a helical span at residues 42–83 (SSAAAPKPGPPAGLSGGLSQPAGWQSLLSFTILFLAWLAGFS). Over 84–170 (SRLFAVIRFE…VHIRDVCVFL (87 aa)) the chain is Lumenal. Residues 98-100 (EFD) carry the DXD motif 1 motif. Asp-100 is a binding site for Mn(2+). The chain crosses the membrane as a helical span at residues 171–189 (APTFSGLTSISTFLLTREL). Topologically, residues 190-191 (WN) are cytoplasmic. Residues 192–209 (QGAGLLAACFIAIVPGYI) form a helical membrane-spanning segment. Over 210–220 (SRSVAGSFDNE) the chain is Lumenal. Mn(2+)-binding residues include Asp-218 and Glu-220. A DXD motif 2 motif is present at residues 218 to 220 (DNE). A helical membrane pass occupies residues 221-240 (GIAIFALQFTYYLWVKSVKT). The Cytoplasmic portion of the chain corresponds to 241–242 (GS). Residues 243 to 257 (VFWTMCCCLSYFYMV) traverse the membrane as a helical segment. At 258-262 (SAWGG) the chain is on the lumenal side. The chain crosses the membrane as a helical span at residues 263–279 (YVFIINLIPLHVFVLLL). Residues 280 to 284 (MQRYS) are Cytoplasmic-facing. A helical transmembrane segment spans residues 285 to 310 (KRVYIAYSTFYIVGLILSMQIPFVGF). The Lumenal portion of the chain corresponds to 311-318 (QPIRTSEH). Residues 319-338 (MAAAGVFALLQAYAFLQYLR) traverse the membrane as a helical segment. The Cytoplasmic portion of the chain corresponds to 339–347 (DRLTKQEFQ). Residues 348 to 368 (TLFFLGVSLAAGAVFLSVIYL) traverse the membrane as a helical segment. The Lumenal portion of the chain corresponds to 369-407 (TYTGYIAPWSGRFYSLWDTGYAKIHIPIIASVSEHQPTT). Positions 399-402 (SVSE) match the SVSE motif motif. The chain crosses the membrane as a helical span at residues 408–430 (WVSFFFDLHILVCTFPAGLWFCI). Over 431 to 436 (KNINDE) the chain is Cytoplasmic. Residues 437–453 (RVFVALYAISAVYFAGV) traverse the membrane as a helical segment. The Lumenal segment spans residues 454–457 (MVRL). Residue Arg-456 coordinates dolichyl diphosphooligosaccharide. A helical transmembrane segment spans residues 458-479 (MLTLTPVVCMLSAIAFSNVFEH). The Cytoplasmic segment spans residues 480–523 (YLGDDMKRENPPVEDSSDEDDKRNPGNLYDKAGKVRKHVTEQEK). The disordered stretch occupies residues 487–526 (RENPPVEDSSDEDDKRNPGNLYDKAGKVRKHVTEQEKPEE). A phosphoserine mark is found at Ser-495 and Ser-496. Positions 517–526 (HVTEQEKPEE) are enriched in basic and acidic residues. A helical membrane pass occupies residues 524–549 (PEEGLGPNIKSIVTMLMLMLLMMFAV). At 550 to 823 (HCTWVTSNAY…KGKKTSKKTV (274 aa)) the chain is on the lumenal side. Residues 601-603 (WWD) form an interacts with target acceptor peptide in protein substrate region. The short motif at 601–605 (WWDYG) is the WWDYG motif element. Dolichyl diphosphooligosaccharide is bound at residue Tyr-606. N-linked (GlcNAc...) asparagine glycosylation is found at Asn-613 and Asn-620. N-linked (GlcNAc...) (high mannose) asparagine glycosylation is present at Asn-624. An N-linked (GlcNAc...) asparagine glycan is attached at Asn-638. The DK motif motif lies at 668-675 (DINKFLWM).

It belongs to the STT3 family. As to quaternary structure, component of the oligosaccharyltransferase (OST) complex. There are 2 OST complexes, OST-A and OST-B, which contain STT3A or STT3B as catalytic subunit, respectively. OST-A and OST-B contain common core subunits RPN1, RPN2, OST48, OST4, DAD1 and TMEM258, and OST-B contains either MAGT1 or TUSC3 as specific accessory subunit. The cofactor is Mg(2+). Mn(2+) serves as cofactor.

It is found in the endoplasmic reticulum membrane. It carries out the reaction a di-trans,poly-cis-dolichyl diphosphooligosaccharide + L-asparaginyl-[protein] = N(4)-(oligosaccharide-(1-&gt;4)-N-acetyl-beta-D-glucosaminyl-(1-&gt;4)-N-acetyl-beta-D-glucosaminyl)-L-asparaginyl-[protein] + a di-trans,poly-cis-dolichyl diphosphate + H(+). It functions in the pathway protein modification; protein glycosylation. Catalytic subunit of the oligosaccharyl transferase (OST) complex that catalyzes the initial transfer of a defined glycan (Glc(3)Man(9)GlcNAc(2) in eukaryotes) from the lipid carrier dolichol-pyrophosphate to an asparagine residue within an Asn-X-Ser/Thr consensus motif in nascent polypeptide chains, the first step in protein N-glycosylation. N-glycosylation occurs cotranslationally and the complex associates with the Sec61 complex at the channel-forming translocon complex that mediates protein translocation across the endoplasmic reticulum (ER). All subunits are required for a maximal enzyme activity. This subunit contains the active site and the acceptor peptide and donor lipid-linked oligosaccharide (LLO) binding pockets. STT3B is present in a small subset of OST complexes and mediates both cotranslational and post-translational N-glycosylation of target proteins: STT3B-containing complexes are required for efficient post-translational glycosylation and while they are less competent than STT3A-containing complexes for cotranslational glycosylation, they have the ability to mediate glycosylation of some nascent sites that are not accessible for STT3A. STT3B-containing complexes also act post-translationally and mediate modification of skipped glycosylation sites in unfolded proteins. Plays a role in ER-associated degradation (ERAD) pathway that mediates ubiquitin-dependent degradation of misfolded endoplasmic reticulum proteins by mediating N-glycosylation of unfolded proteins, which are then recognized by the ERAD pathway and targeted for degradation. This is Dolichyl-diphosphooligosaccharide--protein glycosyltransferase subunit STT3B from Mus musculus (Mouse).